Consider the following 504-residue polypeptide: Bifunctional purine biosynthesis protein PurH (504 aa).

The 144-residue stretch at 1 to 144 (MRKRALISVY…KSFKNVVVIS (144 aa)) folds into the MGS-like domain.

It belongs to the PurH family.

It carries out the reaction (6R)-10-formyltetrahydrofolate + 5-amino-1-(5-phospho-beta-D-ribosyl)imidazole-4-carboxamide = 5-formamido-1-(5-phospho-D-ribosyl)imidazole-4-carboxamide + (6S)-5,6,7,8-tetrahydrofolate. The enzyme catalyses IMP + H2O = 5-formamido-1-(5-phospho-D-ribosyl)imidazole-4-carboxamide. Its pathway is purine metabolism; IMP biosynthesis via de novo pathway; 5-formamido-1-(5-phospho-D-ribosyl)imidazole-4-carboxamide from 5-amino-1-(5-phospho-D-ribosyl)imidazole-4-carboxamide (10-formyl THF route): step 1/1. It participates in purine metabolism; IMP biosynthesis via de novo pathway; IMP from 5-formamido-1-(5-phospho-D-ribosyl)imidazole-4-carboxamide: step 1/1. This is Bifunctional purine biosynthesis protein PurH from Fusobacterium nucleatum subsp. nucleatum (strain ATCC 25586 / DSM 15643 / BCRC 10681 / CIP 101130 / JCM 8532 / KCTC 2640 / LMG 13131 / VPI 4355).